We begin with the raw amino-acid sequence, 92 residues long: C-C motif chemokine 3 (92 aa).

Residues 1 to 23 form the signal peptide; the sequence is MQVSTAALAVLLCTMALCNQFSA. 2 disulfides stabilise this stretch: C33-C57 and C34-C73.

Belongs to the intercrine beta (chemokine CC) family. In terms of assembly, self-associates. Also heterodimer of MIP-1-alpha(4-69) and MIP-1-beta(3-69). Interacts with CCR1. In terms of processing, N-terminal processed form LD78-alpha(4-69) is produced by proteolytic cleavage after secretion from HTLV1-transformed T-cells.

It localises to the secreted. Its function is as follows. Monokine with inflammatory and chemokinetic properties. Binds to CCR1, CCR4 and CCR5. One of the major HIV-suppressive factors produced by CD8+ T-cells. Recombinant MIP-1-alpha induces a dose-dependent inhibition of different strains of HIV-1, HIV-2, and simian immunodeficiency virus (SIV). In Homo sapiens (Human), this protein is C-C motif chemokine 3 (CCL3).